A 157-amino-acid polypeptide reads, in one-letter code: SsrA-binding protein (157 aa).

Basic and acidic residues predominate over residues 135 to 151; the sequence is DKRETEKKRDWSREKGR. The segment at 135 to 157 is disordered; it reads DKRETEKKRDWSREKGRLLRARG.

It belongs to the SmpB family.

It is found in the cytoplasm. Its function is as follows. Required for rescue of stalled ribosomes mediated by trans-translation. Binds to transfer-messenger RNA (tmRNA), required for stable association of tmRNA with ribosomes. tmRNA and SmpB together mimic tRNA shape, replacing the anticodon stem-loop with SmpB. tmRNA is encoded by the ssrA gene; the 2 termini fold to resemble tRNA(Ala) and it encodes a 'tag peptide', a short internal open reading frame. During trans-translation Ala-aminoacylated tmRNA acts like a tRNA, entering the A-site of stalled ribosomes, displacing the stalled mRNA. The ribosome then switches to translate the ORF on the tmRNA; the nascent peptide is terminated with the 'tag peptide' encoded by the tmRNA and targeted for degradation. The ribosome is freed to recommence translation, which seems to be the essential function of trans-translation. The protein is SsrA-binding protein of Rhodopseudomonas palustris (strain BisB5).